The following is a 64-amino-acid chain: Mitotic-spindle organizing protein 1 (64 aa).

It belongs to the MOZART1 family. Part of the gamma-tubulin complex. Interacts directly with alp6/GPC3.

The protein resides in the cytoplasm. It localises to the cytoskeleton. It is found in the microtubule organizing center. Its subcellular location is the spindle pole body. In terms of biological role, required for gamma-tubulin complex recruitment to the microtubule organizing center (MTOC). This chain is Mitotic-spindle organizing protein 1 (mzt1), found in Schizosaccharomyces pombe (strain 972 / ATCC 24843) (Fission yeast).